We begin with the raw amino-acid sequence, 847 residues long: Glucans biosynthesis glucosyltransferase H (847 aa).

The Cytoplasmic portion of the chain corresponds to 1 to 138; sequence MNKTTEYIDA…KWRTVGTIRR (138 aa). The chain crosses the membrane as a helical span at residues 139–156; the sequence is YILLILTLAQTVVATWYM. The Periplasmic portion of the chain corresponds to 157-193; that stretch reads KTILPYQGWALINPMDMVGQDIWVSFMQLLPYMLQTG. A helical membrane pass occupies residues 194-216; the sequence is ILILFAVLFCWVSAGFWTALMGF. The Cytoplasmic segment spans residues 217–511; sequence LQLLIGRDKY…LVKGMHPVHR (295 aa). Residues 512–534 form a helical membrane-spanning segment; it reads AVFLTGVMSYLSAPLWFMFLALS. The Periplasmic segment spans residues 535-567; that stretch reads TALQVVHALTEPQYFLQPRQLFPVWPQWRPELA. A helical membrane pass occupies residues 568–590; it reads IALFASTMVLLFLPKLLSIMLIW. Over 591–602 the chain is Cytoplasmic; that stretch reads CKGTKEYGGFWR. A helical transmembrane segment spans residues 603–625; sequence VTLSLLLEVLFSVLLAPVRMLFH. Topologically, residues 626–679 are periplasmic; the sequence is TVFVVSAFLGWEVVWNSPQRDDDSTPWGEAFMRHGSQLLLGLVWAVGMAWLDLR. The helical transmembrane segment at 680–702 threads the bilayer; the sequence is FLFWLAPIVFSLILSPFVSVISS. Residues 703–847 are Cytoplasmic-facing; that stretch reads RSTVGLRTKR…ALQGRTSSAG (145 aa).

The protein belongs to the glycosyltransferase 2 family. OpgH subfamily.

It localises to the cell inner membrane. It participates in glycan metabolism; osmoregulated periplasmic glucan (OPG) biosynthesis. Functionally, involved in the biosynthesis of osmoregulated periplasmic glucans (OPGs). This is Glucans biosynthesis glucosyltransferase H from Salmonella typhi.